The chain runs to 176 residues: Disulfide bond formation protein B (176 aa).

Residues Met-1–Ala-14 are Cytoplasmic-facing. The helical transmembrane segment at Trp-15 to Trp-31 threads the bilayer. The Periplasmic portion of the chain corresponds to Phe-32–Cys-49. Cys-41 and Cys-44 form a disulfide bridge. The chain crosses the membrane as a helical span at residues Ala-50–Pro-65. Topologically, residues Lys-66–Tyr-71 are cytoplasmic. A helical transmembrane segment spans residues Val-72–Tyr-89. Over Glu-90 to Gln-144 the chain is Periplasmic. A disulfide bridge connects residues Cys-104 and Cys-130. A helical membrane pass occupies residues Trp-145–Ser-163. Topologically, residues Gln-164 to Arg-176 are cytoplasmic.

The protein belongs to the DsbB family.

Its subcellular location is the cell inner membrane. Functionally, required for disulfide bond formation in some periplasmic proteins. Acts by oxidizing the DsbA protein. In Escherichia coli O6:K15:H31 (strain 536 / UPEC), this protein is Disulfide bond formation protein B.